A 471-amino-acid polypeptide reads, in one-letter code: Glutamate--tRNA ligase (471 aa).

A 'HIGH' region motif is present at residues 9–19 (PSPTGYLHVGG). Residues cysteine 98, cysteine 100, cysteine 125, and aspartate 127 each coordinate Zn(2+). The short motif at 237 to 241 (KLSKR) is the 'KMSKS' region element. An ATP-binding site is contributed by lysine 240.

This sequence belongs to the class-I aminoacyl-tRNA synthetase family. Glutamate--tRNA ligase type 1 subfamily. In terms of assembly, monomer. Zn(2+) serves as cofactor.

It localises to the cytoplasm. It catalyses the reaction tRNA(Glu) + L-glutamate + ATP = L-glutamyl-tRNA(Glu) + AMP + diphosphate. Catalyzes the attachment of glutamate to tRNA(Glu) in a two-step reaction: glutamate is first activated by ATP to form Glu-AMP and then transferred to the acceptor end of tRNA(Glu). In Yersinia pseudotuberculosis serotype O:1b (strain IP 31758), this protein is Glutamate--tRNA ligase.